Reading from the N-terminus, the 355-residue chain is UDP-3-O-acylglucosamine N-acyltransferase (355 aa).

The active-site Proton acceptor is the histidine 246.

The protein belongs to the transferase hexapeptide repeat family. LpxD subfamily. As to quaternary structure, homotrimer.

It catalyses the reaction a UDP-3-O-[(3R)-3-hydroxyacyl]-alpha-D-glucosamine + a (3R)-hydroxyacyl-[ACP] = a UDP-2-N,3-O-bis[(3R)-3-hydroxyacyl]-alpha-D-glucosamine + holo-[ACP] + H(+). It functions in the pathway bacterial outer membrane biogenesis; LPS lipid A biosynthesis. In terms of biological role, catalyzes the N-acylation of UDP-3-O-acylglucosamine using 3-hydroxyacyl-ACP as the acyl donor. Is involved in the biosynthesis of lipid A, a phosphorylated glycolipid that anchors the lipopolysaccharide to the outer membrane of the cell. The protein is UDP-3-O-acylglucosamine N-acyltransferase of Polaromonas naphthalenivorans (strain CJ2).